The chain runs to 418 residues: Translation initiation factor 2 subunit gamma (418 aa).

Residues 7 to 206 (QPEVNIGVVG…GIQKYIPTPQ (200 aa)) enclose the tr-type G domain. Residues 16–23 (GHVDHGKT) are G1. Residues Asp19, Thr23, Gly44, and Thr46 each contribute to the Mg(2+) site. 19 to 24 (DHGKTT) is a binding site for GTP. Residues 44–48 (GMTIK) form a G2 region. 4 residues coordinate Zn(2+): Cys59, Cys62, Cys74, and Cys77. Residues 93–96 (DAPG) form a G3 region. Residues 149–152 (NKVD) and 184–186 (SAL) contribute to the GTP site. The tract at residues 149-152 (NKVD) is G4. Residues 184–186 (SAL) are G5.

It belongs to the TRAFAC class translation factor GTPase superfamily. Classic translation factor GTPase family. EIF2G subfamily. As to quaternary structure, heterotrimer composed of an alpha, a beta and a gamma chain. Mg(2+) serves as cofactor.

The catalysed reaction is GTP + H2O = GDP + phosphate + H(+). Functionally, eIF-2 functions in the early steps of protein synthesis by forming a ternary complex with GTP and initiator tRNA. This chain is Translation initiation factor 2 subunit gamma, found in Sulfurisphaera tokodaii (strain DSM 16993 / JCM 10545 / NBRC 100140 / 7) (Sulfolobus tokodaii).